The following is a 486-amino-acid chain: Cardiolipin synthase A (486 aa).

The next 2 helical transmembrane spans lie at 3–23 and 38–58; these read TFYTVVSWLVILGYWVLIAGV and MAWLLIIYILPLVGIIAYLSV. PLD phosphodiesterase domains follow at residues 219–246 and 399–426; these read MDLRQHRKMVMIDNYIAYTGSMNMVDPR and EGGLLHTKSVLVDGELSLVGTVNLDMRS. Active-site residues include His224, Lys226, Asp231, His404, Lys406, and Asp411.

Belongs to the phospholipase D family. Cardiolipin synthase subfamily. ClsA sub-subfamily.

It is found in the cell inner membrane. It catalyses the reaction 2 a 1,2-diacyl-sn-glycero-3-phospho-(1'-sn-glycerol) = a cardiolipin + glycerol. In terms of biological role, catalyzes the reversible phosphatidyl group transfer from one phosphatidylglycerol molecule to another to form cardiolipin (CL) (diphosphatidylglycerol) and glycerol. The sequence is that of Cardiolipin synthase A from Salmonella arizonae (strain ATCC BAA-731 / CDC346-86 / RSK2980).